Consider the following 113-residue polypeptide: U11-theraphotoxin-Hhn1a (113 aa).

Positions 1–21 are cleaved as a signal peptide; the sequence is MNTVRVTFLLVFVLAVSLGQA. A propeptide spanning residues 22 to 74 is cleaved from the precursor; sequence DKDENRMEMQEKAEQGKSYLDFAENLLLQKLEELEAKLLEEDSEESRNSRQKR. 3 disulfide bridges follow: Cys75-Cys90, Cys82-Cys95, and Cys89-Cys110.

The protein belongs to the neurotoxin 14 (magi-1) family. 01 (HNTX-16) subfamily. As to expression, expressed by the venom gland.

Its subcellular location is the secreted. Probable ion channel inhibitor. This chain is U11-theraphotoxin-Hhn1a, found in Cyriopagopus hainanus (Chinese bird spider).